We begin with the raw amino-acid sequence, 287 residues long: Thioredoxin-related transmembrane protein 2 (287 aa).

Positions 1 to 13 are cleaved as a signal peptide; it reads MAVLAPLLAVLYA. The Extracellular portion of the chain corresponds to 14-112; it reads APGLLRWVSQ…ILFFRLDLRM (99 aa). A helical membrane pass occupies residues 113-133; it reads GLLYITLCIVFLMTCKPPLYL. At 134–287 the chain is on the cytoplasmic side; sequence GPEHIKYFSD…NEWNDGKKDQ (154 aa). The 73-residue stretch at 137 to 209 folds into the Thioredoxin domain; sequence HIKYFSDKTL…PEVSCRYSIS (73 aa). The Di-lysine motif motif lies at 284-287; it reads KKDQ.

Monomer. Homodimer; disulfide-linked. Occurs in both reduced and oxidized monomeric form. Oxidative conditions increase homodimerization.

It is found in the endoplasmic reticulum membrane. It localises to the mitochondrion membrane. In terms of biological role, endoplasmic reticulum and mitochondria-associated protein that probably functions as a regulator of cellular redox state and thereby regulates protein post-translational modification, protein folding and mitochondrial activity. The polypeptide is Thioredoxin-related transmembrane protein 2 (tmx2) (Xenopus laevis (African clawed frog)).